The following is a 92-amino-acid chain: Plasmid copy control protein CopR (92 aa).

Residues Met-1–Met-27 are compositionally biased toward basic and acidic residues. Disordered stretches follow at residues Met-1–Ser-40 and Ile-63–Val-92. The region spanning Leu-9–Leu-62 is the HTH cro/C1-type domain. The H-T-H motif DNA-binding region spans Lys-20–Lys-39.

In terms of biological role, involved in copy control of plasmid pIP501. This Streptococcus agalactiae protein is Plasmid copy control protein CopR (copR).